Consider the following 270-residue polypeptide: Large ribosomal subunit protein uL30 (270 aa).

Met1 is subject to N-acetylmethionine. 6 tandem repeats follow at residues Lys7–Leu18, Lys19–Leu29, Lys30–Leu40, Lys41–Val52, Lys53–Leu64, and Arg65–Ala76. Residues Lys7–Ala76 form a 6 X 12 AA tandem repeats region. At Thr39 the chain carries Phosphothreonine. Lys146 bears the N6-acetyllysine mark. Lys149 is subject to N6-succinyllysine. Tyr161 bears the Phosphotyrosine mark.

Belongs to the universal ribosomal protein uL30 family. As to quaternary structure, component of the large ribosomal subunit. Homodimer. Interacts with DHX33.

The protein resides in the cytoplasm. In terms of biological role, component of the large ribosomal subunit. The ribosome is a large ribonucleoprotein complex responsible for the synthesis of proteins in the cell. Binds to G-rich structures in 28S rRNA and in mRNAs. Plays a regulatory role in the translation apparatus; inhibits cell-free translation of mRNAs. The sequence is that of Large ribosomal subunit protein uL30 (Rpl7) from Mus musculus (Mouse).